Consider the following 870-residue polypeptide: DNA mismatch repair protein MutS (870 aa).

Residue 629 to 636 (GPNMGGKS) participates in ATP binding.

Belongs to the DNA mismatch repair MutS family.

In terms of biological role, this protein is involved in the repair of mismatches in DNA. It is possible that it carries out the mismatch recognition step. This protein has a weak ATPase activity. In Polaromonas naphthalenivorans (strain CJ2), this protein is DNA mismatch repair protein MutS.